We begin with the raw amino-acid sequence, 282 residues long: BURP domain-containing protein BNM2A (282 aa).

Residues 1 to 26 (MASLRFSVTFPALLSLLLLSLWVVEA) form the signal peptide. The BURP domain maps to 60–282 (FFKISDLKLG…PLDNIVWVSK (223 aa)).

As to expression, expressed in the radicle and cotyledon of germinating seeds 2 days post-imbibition (DPI), in stems and roots of 30-DPI young plants and in floral buds, but not in fully open flowers or leaves. Expressed in the embryo and seed coat tissues of developing seeds. The protein accumulates only in seeds and only long after transcript accumulation becomes evident.

It is found in the protein storage vacuole. The protein is BURP domain-containing protein BNM2A of Brassica napus (Rape).